Reading from the N-terminus, the 481-residue chain is Proline--tRNA ligase (481 aa).

This sequence belongs to the class-II aminoacyl-tRNA synthetase family. ProS type 3 subfamily. Homodimer.

Its subcellular location is the cytoplasm. It catalyses the reaction tRNA(Pro) + L-proline + ATP = L-prolyl-tRNA(Pro) + AMP + diphosphate. In terms of biological role, catalyzes the attachment of proline to tRNA(Pro) in a two-step reaction: proline is first activated by ATP to form Pro-AMP and then transferred to the acceptor end of tRNA(Pro). This Chlorobium limicola (strain DSM 245 / NBRC 103803 / 6330) protein is Proline--tRNA ligase.